The primary structure comprises 427 residues: UPF0229 protein YeaH (427 aa).

Positions 84-110 are disordered; sequence QSDRIERPQGGGGGSGSGQGQASQDGE. Residues 92–102 are compositionally biased toward gly residues; sequence QGGGGGSGSGQ.

It belongs to the UPF0229 family.

The polypeptide is UPF0229 protein YeaH (Escherichia fergusonii (strain ATCC 35469 / DSM 13698 / CCUG 18766 / IAM 14443 / JCM 21226 / LMG 7866 / NBRC 102419 / NCTC 12128 / CDC 0568-73)).